The primary structure comprises 116 residues: UPF0342 protein CTC_01059 (116 aa).

The protein belongs to the UPF0342 family.

The polypeptide is UPF0342 protein CTC_01059 (Clostridium tetani (strain Massachusetts / E88)).